We begin with the raw amino-acid sequence, 1613 residues long: Vitellogenin-2 (1613 aa).

The first 15 residues, 1 to 15 (MRSIIIASLVALALA), serve as a signal peptide directing secretion. Residues 24-687 (FEPKTDYHYK…EKNSFLPKDL (664 aa)) form the Vitellogenin domain. N-linked (GlcNAc...) asparagine glycosylation occurs at Asn-1268. The VWFD domain maps to 1308-1477 (SVCKVQKNQI…SYLLKNEECE (170 aa)). Disulfide bonds link Cys-1310-Cys-1440 and Cys-1332-Cys-1476. The tract at residues 1491–1531 (KYERDEEQSDEYSSEETYDYEQENTKKSQKNQRSQKKSDLV) is disordered. The segment covering 1495 to 1512 (DEEQSDEYSSEETYDYEQ) has biased composition (acidic residues).

In terms of tissue distribution, expressed in the intestine of adult hermaphrodites.

The protein localises to the secreted. Its function is as follows. Precursor of the egg-yolk proteins that are sources of nutrients during embryonic development. Together with other vitellogenins, may play a role in modulating life-span, acting via induction of autophagy and lysosomal lipolysis. The chain is Vitellogenin-2 (vit-2) from Caenorhabditis elegans.